The chain runs to 95 residues: Protein Vpr (95 aa).

The tract at residues 1–42 (MERAPEDAGPQREPYNEWALELLEELKNEAVRHFPRIWLHGL) is homooligomerization. Residues serine 79, serine 93, and serine 95 each carry the phosphoserine; by host modification.

The protein belongs to the HIV-1 VPR protein family. As to quaternary structure, homooligomer, may form homodimer. Interacts with p6-gag region of the Pr55 Gag precursor protein through a (Leu-X-X)4 motif near the C-terminus of the P6gag protein. Interacts with host UNG. May interact with host RAD23A/HHR23A. Interacts with host VPRBP/DCAF1, leading to hijack the CUL4A-RBX1-DDB1-DCAF1/VPRBP complex, mediating ubiquitination of host proteins such as TERT and ZGPAT and arrest of the cell cycle in G2 phase. In terms of processing, phosphorylated on several residues by host. These phosphorylations regulate VPR activity for the nuclear import of the HIV-1 pre-integration complex.

The protein resides in the virion. It localises to the host nucleus. The protein localises to the host extracellular space. Functionally, during virus replication, may deplete host UNG protein, and incude G2-M cell cycle arrest. Acts by targeting specific host proteins for degradation by the 26S proteasome, through association with the cellular CUL4A-DDB1 E3 ligase complex by direct interaction with host VPRPB/DCAF-1. Cell cycle arrest reportedly occurs within hours of infection and is not blocked by antiviral agents, suggesting that it is initiated by the VPR carried into the virion. Additionally, VPR induces apoptosis in a cell cycle dependent manner suggesting that these two effects are mechanistically linked. Detected in the serum and cerebrospinal fluid of AIDS patient, VPR may also induce cell death to bystander cells. In terms of biological role, during virus entry, plays a role in the transport of the viral pre-integration (PIC) complex to the host nucleus. This function is crucial for viral infection of non-dividing macrophages. May act directly at the nuclear pore complex, by binding nucleoporins phenylalanine-glycine (FG)-repeat regions. This chain is Protein Vpr, found in Homo sapiens (Human).